The chain runs to 98 residues: MTLVMFNITIAFTLSLLGTLMFRTHLMSTLLCLEGMMLCLFIMAVITSLDTHPMIMYPIPIIILVFAACEAAVGLALLAMVSSTYGTDYVQNLNLLQC.

The next 3 helical transmembrane spans lie at 2 to 22 (TLVM…TLMF), 26 to 46 (LMST…MAVI), and 61 to 81 (IIIL…LAMV).

It belongs to the complex I subunit 4L family. As to quaternary structure, core subunit of respiratory chain NADH dehydrogenase (Complex I) which is composed of 45 different subunits.

The protein localises to the mitochondrion inner membrane. The catalysed reaction is a ubiquinone + NADH + 5 H(+)(in) = a ubiquinol + NAD(+) + 4 H(+)(out). Functionally, core subunit of the mitochondrial membrane respiratory chain NADH dehydrogenase (Complex I) which catalyzes electron transfer from NADH through the respiratory chain, using ubiquinone as an electron acceptor. Part of the enzyme membrane arm which is embedded in the lipid bilayer and involved in proton translocation. The sequence is that of NADH-ubiquinone oxidoreductase chain 4L (MT-ND4L) from Nyctomys sumichrasti (Sumichrast's vesper rat).